The primary structure comprises 1061 residues: Bifunctional cytochrome P450/NADPH--P450 reductase 1 (1061 aa).

The tract at residues 1-475 (MKETSPIPQP…AEKAAPDEQK (475 aa)) is cytochrome P450. Heme is bound at residue cysteine 403. Residues 476–1061 (EKTEAKGASV…MYAKDVWAGI (586 aa)) form an NADPH--P450 reductase region. The region spanning 493-632 (LLVLYGSDTG…QLDEWKKSMW (140 aa)) is the Flavodoxin-like domain. FMN contacts are provided by residues 499-504 (SDTGTA), 546-549 (SYNG), 580-582 (CGD), and 588-590 (TYQ). One can recognise an FAD-binding FR-type domain in the interval 671-904 (YEASHASIAE…RTPESRFQLP (234 aa)).

This sequence in the N-terminal section; belongs to the cytochrome P450 family. FAD serves as cofactor. FMN is required as a cofactor. Requires heme b as cofactor.

Its subcellular location is the cytoplasm. The enzyme catalyses an organic molecule + reduced [NADPH--hemoprotein reductase] + O2 = an alcohol + oxidized [NADPH--hemoprotein reductase] + H2O + H(+). The catalysed reaction is 2 oxidized [cytochrome P450] + NADPH = 2 reduced [cytochrome P450] + NADP(+) + H(+). Functions as a fatty acid monooxygenase. Catalyzes hydroxylation of a range of long-chain fatty acids, with a preference for long-chain unsaturated and branched-chain fatty acids over saturated fatty acids. Hydroxylation of myristic acid occurs mainly at the omega-2 position. Also displays a NADPH-dependent reductase activity in the C-terminal domain, which allows electron transfer from NADPH to the heme iron of the cytochrome P450 N-terminal domain. Is also able to catalyze efficient oxidation of sodium dodecyl sulfate (SDS). This is Bifunctional cytochrome P450/NADPH--P450 reductase 1 from Bacillus subtilis (strain 168).